Consider the following 298-residue polypeptide: ATP phosphoribosyltransferase (298 aa).

The protein belongs to the ATP phosphoribosyltransferase family. Long subfamily. Mg(2+) serves as cofactor.

The protein localises to the cytoplasm. The catalysed reaction is 1-(5-phospho-beta-D-ribosyl)-ATP + diphosphate = 5-phospho-alpha-D-ribose 1-diphosphate + ATP. The protein operates within amino-acid biosynthesis; L-histidine biosynthesis; L-histidine from 5-phospho-alpha-D-ribose 1-diphosphate: step 1/9. With respect to regulation, feedback inhibited by histidine. In terms of biological role, catalyzes the condensation of ATP and 5-phosphoribose 1-diphosphate to form N'-(5'-phosphoribosyl)-ATP (PR-ATP). Has a crucial role in the pathway because the rate of histidine biosynthesis seems to be controlled primarily by regulation of HisG enzymatic activity. This chain is ATP phosphoribosyltransferase, found in Tolumonas auensis (strain DSM 9187 / NBRC 110442 / TA 4).